The following is a 352-amino-acid chain: GTPase Obg (352 aa).

An Obg domain is found at 1 to 159 (MHFLDQAKIF…MYVWLRLKLL (159 aa)). Residues 122–142 (DGGRGNASYKTSTNRAPRQHG) are disordered. The region spanning 160–328 (ADAGLVGLPN…LLDAVLEYLP (169 aa)) is the OBG-type G domain. Residues 166–173 (GLPNAGKS), 191–195 (FTTLR), 212–215 (DIPG), 280–283 (NKID), and 309–311 (SGA) contribute to the GTP site. Mg(2+)-binding residues include Ser-173 and Thr-193.

Belongs to the TRAFAC class OBG-HflX-like GTPase superfamily. OBG GTPase family. Monomer. Mg(2+) is required as a cofactor.

It localises to the cytoplasm. Functionally, an essential GTPase which binds GTP, GDP and possibly (p)ppGpp with moderate affinity, with high nucleotide exchange rates and a fairly low GTP hydrolysis rate. Plays a role in control of the cell cycle, stress response, ribosome biogenesis and in those bacteria that undergo differentiation, in morphogenesis control. The sequence is that of GTPase Obg from Novosphingobium aromaticivorans (strain ATCC 700278 / DSM 12444 / CCUG 56034 / CIP 105152 / NBRC 16084 / F199).